Consider the following 141-residue polypeptide: Large ribosomal subunit protein uL11 (141 aa).

Belongs to the universal ribosomal protein uL11 family. In terms of assembly, part of the ribosomal stalk of the 50S ribosomal subunit. Interacts with L10 and the large rRNA to form the base of the stalk. L10 forms an elongated spine to which L12 dimers bind in a sequential fashion forming a multimeric L10(L12)X complex. One or more lysine residues are methylated.

In terms of biological role, forms part of the ribosomal stalk which helps the ribosome interact with GTP-bound translation factors. The polypeptide is Large ribosomal subunit protein uL11 (Chloroflexus aggregans (strain MD-66 / DSM 9485)).